Consider the following 144-residue polypeptide: Maximins 4/H3 type 3 (144 aa).

An N-terminal signal peptide occupies residues 1 to 18; sequence MNFKYIIAVSFFIASAYA. The propeptide occupies 19 to 43; the sequence is RTEEKDVQSLSQRDVLEEESLREIR. An Asparagine amide modification is found at Asn-70. Positions 74-123 are excised as a propeptide; it reads TAEDHEVMKRLEAVMRDLDSLDHPEEASERQTRGFNQEEIANLFTKKEKR. Position 143 is an isoleucine amide (Ile-143).

Belongs to the bombinin family. In terms of tissue distribution, expressed by the skin glands.

It localises to the secreted. Functionally, maximin-4 shows antibacterial activity against both Gram-positive and Gram-negative bacteria. It also shows antimicrobial activity against the fungus C.albicans, but not against A.flavus nor P.uticale. It has little hemolytic activity. It does not possess a significant cytotoxicity against tumor cell lines. It does not possess a significant anti-HIV activity. Maximin-H3 shows antibacterial activity against both Gram-positive and Gram-negative bacteria. It also shows antimicrobial activity against the fungus C.albicans. Shows strong hemolytic activity. This Bombina maxima (Giant fire-bellied toad) protein is Maximins 4/H3 type 3.